We begin with the raw amino-acid sequence, 90 residues long: Large ribosomal subunit protein uL23c (90 aa).

Belongs to the universal ribosomal protein uL23 family. Part of the 50S ribosomal subunit.

The protein resides in the plastid. It is found in the chloroplast. Functionally, binds to 23S rRNA. The chain is Large ribosomal subunit protein uL23c (rpl23) from Oltmannsiellopsis viridis (Marine flagellate).